Reading from the N-terminus, the 463-residue chain is Nitrate/nitrite antiporter NarK (463 aa).

Topologically, residues 1–37 are cytoplasmic; the sequence is MSHSSAPERATGAVITDWRPEDPAFWQQRGQRIASRN. Residues 38–59 form a helical membrane-spanning segment; that stretch reads LWISVPCLLLAFCVWMLFSAVA. Residues 60-73 are Periplasmic-facing; that stretch reads VNLPKVGFNFTTDQ. A helical membrane pass occupies residues 74-95; the sequence is LFMLTALPSVSGALLRVPYSFM. Residue arginine 89 participates in nitrate binding. Arginine 89 is a nitrite binding site. The Cytoplasmic segment spans residues 96–102; sequence VPIFGGR. A helical transmembrane segment spans residues 103–122; it reads RWTAFSTGILIIPCVWLGFA. At 123–130 the chain is on the periplasmic side; the sequence is VQDTSTPY. Residues 131 to 151 traverse the membrane as a helical segment; sequence SVFIIISLLCGFAGANFASSM. Over 152 to 166 the chain is Cytoplasmic; that stretch reads ANISFFFPKQKQGGA. A helical transmembrane segment spans residues 167–189; that stretch reads LGLNGGLGNMGVSVMQLVAPLVV. Asparagine 175 contributes to the nitrate binding site. Residues 190-211 lie on the Periplasmic side of the membrane; that stretch reads SLSIFAVFGSQGVKQPDGTELY. Residues 212-233 form a helical membrane-spanning segment; the sequence is LANASWIWVPFLAIFTIAAWFG. Residues 234 to 253 are Cytoplasmic-facing; the sequence is MNDLATSKASIKEQLPVLKR. Residues 254–281 form a helical membrane-spanning segment; sequence GHLWIMSLLYLATFGSFIGFSAGFAMLS. Tyrosine 263 is a nitrate binding site. Tyrosine 263 lines the nitrite pocket. At 282 to 289 the chain is on the periplasmic side; the sequence is KTQFPDVQ. A helical membrane pass occupies residues 290 to 312; the sequence is ILQYAFFGPFIGALARSAGGALS. The Cytoplasmic segment spans residues 313 to 316; the sequence is DRLG. Residues 317–338 traverse the membrane as a helical segment; sequence GTRVTLVNFILMAIFSGLLFLT. Residues 339–347 lie on the Periplasmic side of the membrane; it reads LPTDGQGGS. The helical transmembrane segment at 348-373 threads the bilayer; sequence FMAFFAVFLALFLTAGLGSGSTFQMI. Residues 374-405 lie on the Cytoplasmic side of the membrane; the sequence is SVIFRKLTMDRVKAEGGSDERAMREAATDTAA. The helical transmembrane segment at 406–427 threads the bilayer; that stretch reads ALGFISAIGAIGGFFIPKAFGS. Serine 411 contributes to the nitrate binding site. At 428–435 the chain is on the periplasmic side; sequence SLALTGSP. Residues 436–458 form a helical membrane-spanning segment; it reads VGAMKVFLIFYIACVVITWAVYG. Over 459 to 463 the chain is Cytoplasmic; that stretch reads RHSKK.

Belongs to the major facilitator superfamily. Nitrate/nitrite porter (TC 2.A.1.8) family.

It is found in the cell inner membrane. It carries out the reaction nitrate(in) + nitrite(out) = nitrate(out) + nitrite(in). In terms of biological role, catalyzes nitrate uptake, nitrite uptake and nitrite export across the cytoplasmic membrane. Functions as a nitrate/nitrite exchanger, and protons are unlikely to be co-transported. The protein is Nitrate/nitrite antiporter NarK of Escherichia coli (strain K12).